Reading from the N-terminus, the 143-residue chain is uncharacterized protein (143 aa).

Residues 1-143 are disordered; sequence MRSSRQKASI…WFSQTVKRKA (143 aa). Basic and acidic residues-rich tracts occupy residues 34–46 and 61–76; these read ISAEKEEEEKHLD and EYQKETKEKETDRKIV. 2 stretches are compositionally biased toward acidic residues: residues 77 to 93 and 103 to 115; these read DDEEETKFETTLEPEEE and YEEEDEDEEPDLA.

This is an uncharacterized protein from Bacillus subtilis (strain 168).